Here is a 445-residue protein sequence, read N- to C-terminus: Argininosuccinate synthase (445 aa).

ATP contacts are provided by residues 18-26 (AFSGGLDTS) and alanine 44. An L-citrulline-binding site is contributed by tyrosine 100. ATP is bound by residues glycine 130 and threonine 132. L-aspartate contacts are provided by threonine 132, asparagine 136, and aspartate 137. An L-citrulline-binding site is contributed by asparagine 136. Aspartate 137 contacts ATP. The L-citrulline site is built by arginine 140 and serine 193. Aspartate 195 provides a ligand contact to ATP. Positions 202, 204, and 281 each coordinate L-citrulline.

It belongs to the argininosuccinate synthase family. Type 2 subfamily. Homotetramer.

Its subcellular location is the cytoplasm. It catalyses the reaction L-citrulline + L-aspartate + ATP = 2-(N(omega)-L-arginino)succinate + AMP + diphosphate + H(+). The protein operates within amino-acid biosynthesis; L-arginine biosynthesis; L-arginine from L-ornithine and carbamoyl phosphate: step 2/3. The chain is Argininosuccinate synthase (argG) from Pasteurella multocida (strain Pm70).